Here is a 358-residue protein sequence, read N- to C-terminus: Photosystem II protein D1 (358 aa).

3 helical membrane-spanning segments follow: residues 29–46, 116–131, and 140–154; these read YVGWFGVLMIPTLLAATI, HFLIGIFCWLGRQWEL, and WICVAYSAPVAAATS. Histidine 116 is a chlorophyll a binding site. Residue tryptophan 124 coordinates pheophytin a. [CaMn4O5] cluster contacts are provided by aspartate 168 and glutamate 187. Residues 195-216 form a helical membrane-spanning segment; sequence FHQLGVAGVFGGSLFCAMHGSL. Histidine 196 serves as a coordination point for chlorophyll a. Residues histidine 213 and 262–263 contribute to the a quinone site; that span reads SF. Histidine 213 provides a ligand contact to Fe cation. Histidine 270 contacts Fe cation. Residues 272–286 traverse the membrane as a helical segment; the sequence is FLAAWPVVCIWFTAL. [CaMn4O5] cluster-binding residues include histidine 330, glutamate 331, aspartate 340, and alanine 342. Residues 343 to 358 constitute a propeptide that is removed on maturation; it reads AGEVLPIALQSPAING.

This sequence belongs to the reaction center PufL/M/PsbA/D family. PSII is composed of 1 copy each of membrane proteins PsbA, PsbB, PsbC, PsbD, PsbE, PsbF, PsbH, PsbI, PsbJ, PsbK, PsbL, PsbM, PsbT, PsbX, PsbY, PsbZ, Psb30/Ycf12, peripheral proteins PsbO, CyanoQ (PsbQ), PsbU, PsbV and a large number of cofactors. It forms dimeric complexes. The D1/D2 heterodimer binds P680, chlorophylls that are the primary electron donor of PSII, and subsequent electron acceptors. It shares a non-heme iron and each subunit binds pheophytin, quinone, additional chlorophylls, carotenoids and lipids. D1 provides most of the ligands for the Mn4-Ca-O5 cluster of the oxygen-evolving complex (OEC). There is also a Cl(-1) ion associated with D1 and D2, which is required for oxygen evolution. The PSII complex binds additional chlorophylls, carotenoids and specific lipids. is required as a cofactor. Tyr-159 forms a radical intermediate that is referred to as redox-active TyrZ, YZ or Y-Z. In terms of processing, C-terminally processed by CtpA; processing is essential to allow assembly of the oxygen-evolving complex and thus photosynthetic growth.

It is found in the cellular thylakoid membrane. The catalysed reaction is 2 a plastoquinone + 4 hnu + 2 H2O = 2 a plastoquinol + O2. Functionally, photosystem II (PSII) is a light-driven water:plastoquinone oxidoreductase that uses light energy to abstract electrons from H(2)O, generating O(2) and a proton gradient subsequently used for ATP formation. It consists of a core antenna complex that captures photons, and an electron transfer chain that converts photonic excitation into a charge separation. The D1/D2 (PsbA/PsbD) reaction center heterodimer binds P680, the primary electron donor of PSII as well as several subsequent electron acceptors. This chain is Photosystem II protein D1, found in Mastigocladus laminosus (Fischerella sp.).